The following is a 295-amino-acid chain: Pyridoxal 5'-phosphate synthase subunit PdxS (295 aa).

D25 lines the D-ribose 5-phosphate pocket. K82 serves as the catalytic Schiff-base intermediate with D-ribose 5-phosphate. Position 154 (G154) interacts with D-ribose 5-phosphate. Residue R166 coordinates D-glyceraldehyde 3-phosphate. D-ribose 5-phosphate is bound by residues G215 and 236-237 (GS).

It belongs to the PdxS/SNZ family. In terms of assembly, in the presence of PdxT, forms a dodecamer of heterodimers.

It carries out the reaction aldehydo-D-ribose 5-phosphate + D-glyceraldehyde 3-phosphate + L-glutamine = pyridoxal 5'-phosphate + L-glutamate + phosphate + 3 H2O + H(+). Its pathway is cofactor biosynthesis; pyridoxal 5'-phosphate biosynthesis. In terms of biological role, catalyzes the formation of pyridoxal 5'-phosphate from ribose 5-phosphate (RBP), glyceraldehyde 3-phosphate (G3P) and ammonia. The ammonia is provided by the PdxT subunit. Can also use ribulose 5-phosphate and dihydroxyacetone phosphate as substrates, resulting from enzyme-catalyzed isomerization of RBP and G3P, respectively. This Dictyoglomus turgidum (strain DSM 6724 / Z-1310) protein is Pyridoxal 5'-phosphate synthase subunit PdxS.